Reading from the N-terminus, the 241-residue chain is tRNA pseudouridine synthase A (241 aa).

Asp52 acts as the Nucleophile in catalysis. Residue Tyr111 participates in substrate binding.

Belongs to the tRNA pseudouridine synthase TruA family. Homodimer.

It carries out the reaction uridine(38/39/40) in tRNA = pseudouridine(38/39/40) in tRNA. In terms of biological role, formation of pseudouridine at positions 38, 39 and 40 in the anticodon stem and loop of transfer RNAs. This Ureaplasma urealyticum serovar 10 (strain ATCC 33699 / Western) protein is tRNA pseudouridine synthase A.